The chain runs to 392 residues: Probable myosin light chain kinase DDB_G0271550 (392 aa).

Positions 20-278 constitute a Protein kinase domain; sequence YEFGPEIGRG…ASQCIKHPWL (259 aa). ATP is bound by residues 26–34 and Lys49; that span reads IGRGAFSIV. The active-site Proton acceptor is the Asp142. Polar residues predominate over residues 317–326; that stretch reads SQSTPNLHSA. The interval 317–392 is disordered; that stretch reads SQSTPNLHSA…NNNNNNNNNI (76 aa). The span at 327-392 shows a compositional bias: low complexity; it reads NSNTNTNSLS…NNNNNNNNNI (66 aa).

The protein belongs to the protein kinase superfamily. CAMK Ser/Thr protein kinase family. CaMK subfamily.

It carries out the reaction L-seryl-[myosin light chain] + ATP = O-phospho-L-seryl-[myosin light chain] + ADP + H(+). The enzyme catalyses L-threonyl-[myosin light chain] + ATP = O-phospho-L-threonyl-[myosin light chain] + ADP + H(+). Its function is as follows. May phosphorylate a specific serine in the N-terminus of a myosin light chain. In Dictyostelium discoideum (Social amoeba), this protein is Probable myosin light chain kinase DDB_G0271550.